Reading from the N-terminus, the 818-residue chain is Dapper 1-A (818 aa).

Pro residues predominate over residues 1 to 10; it reads MKPIPSPEPP. 5 disordered regions span residues 1-30, 60-80, 122-144, 455-486, and 510-530; these read MKPI…WERH, VLSP…PRSD, IDSE…LSDG, NVTP…SALL, and ESSS…SSSQ. An interaction with tcf7l1-A region spans residues 1-337; that stretch reads MKPIPSPEPP…PVRTNKPRTS (337 aa). The span at 21–30 shows a compositional bias: basic and acidic residues; that stretch reads DKGEAEWERH. The stretch at 79 to 130 forms a coiled coil; the sequence is SDEQKLLEENISLLKKQLNCLRKRDAGLLSQLHELDKQINDLKIDSEKTEET. Over residues 122–132 the composition is skewed to basic and acidic residues; that stretch reads IDSEKTEETDS. Over residues 455–485 the composition is skewed to polar residues; the sequence is NVTPNAPANLPNASSSVCNGSPRESTQNSAL. A compositionally biased stretch (basic and acidic residues) spans 512–524; sequence SSFEERPPLDFKS. The PDZ-binding signature appears at 815-818; that stretch reads MTTV.

Belongs to the dapper family. In terms of assembly, interacts with dbf4 and tcf7l1-A. Interacts with dvl2/dsh via the C-terminus. Expressed in the animal and dorsal marginal regions at late blastula and early gastrula stages. Expressed predominantly in the anterior neural plate at neurulation. Expressed mainly in the ectodermal placodes, including the eye anlagen and the otic vesicle, at later stages of development.

It is found in the cytoplasm. The protein resides in the nucleus. Its function is as follows. Involved in regulation of intracellular signaling pathways during development. Specifically thought to play a role in canonical and/or non-canonical Wnt signaling pathways through interaction with DSH (Dishevelled) family proteins. Binds to dvl2/dsh and impedes the degradation of beta-catenin (ctnnb1-A and possibly ctnnb1-B), thereby enhancing the transcriptional activation of target genes of the Wnt signaling pathway. Also promotes catenin delta/ctnnd1 stability which in turn promotes zbtb33/kaiso sequestration and thus is involved in the regulation of zbtb33/kaiso-mediated transcriptional repression. May also bind to and directly stimulate the transcriptional activity of tcf7l1-A. Required for eye development and neural patterning. The chain is Dapper 1-A (dact1-a) from Xenopus laevis (African clawed frog).